A 344-amino-acid polypeptide reads, in one-letter code: Uroporphyrinogen decarboxylase (344 aa).

Substrate is bound by residues 27–31 (RQAGR), phenylalanine 46, aspartate 76, tyrosine 151, serine 206, and histidine 319.

This sequence belongs to the uroporphyrinogen decarboxylase family. In terms of assembly, homodimer.

It localises to the cytoplasm. It catalyses the reaction uroporphyrinogen III + 4 H(+) = coproporphyrinogen III + 4 CO2. The protein operates within porphyrin-containing compound metabolism; protoporphyrin-IX biosynthesis; coproporphyrinogen-III from 5-aminolevulinate: step 4/4. Catalyzes the decarboxylation of four acetate groups of uroporphyrinogen-III to yield coproporphyrinogen-III. The polypeptide is Uroporphyrinogen decarboxylase (Halalkalibacterium halodurans (strain ATCC BAA-125 / DSM 18197 / FERM 7344 / JCM 9153 / C-125) (Bacillus halodurans)).